The sequence spans 152 residues: MIDIPGTPGTLTGLVLRISQCVFAAGSISYMVTSGGFFSFTAFCYLIAAMGLQVIWSFGLAILDTFALVRKKTLLSPVLVSLFVVGDWVTSTLSLAGASSSAGITVLYFGDLGSCSFEAECWKYQLSVALAFLCWITIAVSSLTTLWLLASA.

Over 1-21 (MIDIPGTPGTLTGLVLRISQC) the chain is Cytoplasmic. 2 helical membrane-spanning segments follow: residues 22 to 42 (VFAA…SFTA) and 43 to 63 (FCYL…LAIL). At 64-77 (DTFALVRKKTLLSP) the chain is on the extracellular side. A helical transmembrane segment spans residues 78–98 (VLVSLFVVGDWVTSTLSLAGA). Over 99-127 (SSSAGITVLYFGDLGSCSFEAECWKYQLS) the chain is Cytoplasmic. Residues 128-148 (VALAFLCWITIAVSSLTTLWL) traverse the membrane as a helical segment. Residues 149–152 (LASA) are Extracellular-facing.

This sequence belongs to the Casparian strip membrane proteins (CASP) family. Homodimer and heterodimers. In terms of tissue distribution, expressed in the stele of the root and in leaves.

The protein localises to the cell membrane. In Arabidopsis thaliana (Mouse-ear cress), this protein is CASP-like protein 5B3.